Consider the following 501-residue polypeptide: NAD(P)H-quinone oxidoreductase subunit 2, chloroplastic (501 aa).

A run of 14 helical transmembrane segments spans residues 15–35, 42–62, 82–102, 107–127, 132–152, 167–187, 210–230, 244–264, 278–298, 307–327, 334–354, 378–398, 410–430, and 466–486; these read ILPE…DLIL, VFFF…IFQL, IFRI…IDFI, LAIT…MFLC, LITI…LSGY, LLIG…LYGL, FGSL…LSLV, PTPV…ALLV, WHSL…LVAI, LAYS…TGNF, IVYL…IILF, FSLA…GFFG, GLYF…YYYL, and VSII…NPII.

This sequence belongs to the complex I subunit 2 family. In terms of assembly, NDH is composed of at least 16 different subunits, 5 of which are encoded in the nucleus.

It localises to the plastid. The protein localises to the chloroplast thylakoid membrane. It catalyses the reaction a plastoquinone + NADH + (n+1) H(+)(in) = a plastoquinol + NAD(+) + n H(+)(out). It carries out the reaction a plastoquinone + NADPH + (n+1) H(+)(in) = a plastoquinol + NADP(+) + n H(+)(out). Its function is as follows. NDH shuttles electrons from NAD(P)H:plastoquinone, via FMN and iron-sulfur (Fe-S) centers, to quinones in the photosynthetic chain and possibly in a chloroplast respiratory chain. The immediate electron acceptor for the enzyme in this species is believed to be plastoquinone. Couples the redox reaction to proton translocation, and thus conserves the redox energy in a proton gradient. In Physcomitrium patens (Spreading-leaved earth moss), this protein is NAD(P)H-quinone oxidoreductase subunit 2, chloroplastic.